Reading from the N-terminus, the 396-residue chain is Squamosa promoter-binding-like protein 10 (396 aa).

Residues 74-104 are disordered; the sequence is QSTSINSSSPEDKRCNLASQSSPGDSSSNID. Residues 90–104 show a composition bias toward polar residues; it reads LASQSSPGDSSSNID. The segment at 173 to 250 adopts an SBP-type zinc-finger fold; the sequence is VPRCQIDGCE…SHHNARRRKP (78 aa). 8 residues coordinate Zn(2+): Cys-176, Cys-181, Cys-198, His-201, Cys-217, Cys-220, His-224, and Cys-236. The Bipartite nuclear localization signal signature appears at 233–249; sequence KRSCRKRLSHHNARRRK.

It depends on Zn(2+) as a cofactor.

It localises to the nucleus. In terms of biological role, trans-acting factor that binds specifically to the consensus nucleotide sequence 5'-TNCGTACAA-3'. This Arabidopsis thaliana (Mouse-ear cress) protein is Squamosa promoter-binding-like protein 10 (SPL10).